The chain runs to 622 residues: Low affinity potassium transport system protein Kup (622 aa).

Helical transmembrane passes span 12–32, 49–69, 101–121, 134–154, 163–183, 213–233, 247–267, 276–296, 337–357, 363–383, 395–415, and 419–439; these read ITLA…LYTL, VFGF…LKYL, FLVI…VITP, IIAP…LTLL, GLVG…LAAL, VSFV…ALYA, WFTV…ALLL, PFFL…ATLA, IYIP…IVSF, LAAA…ILST, FLVA…FSAN, and IVSG…VMTT.

The protein belongs to the HAK/KUP transporter (TC 2.A.72) family.

It is found in the cell inner membrane. It carries out the reaction K(+)(in) + H(+)(in) = K(+)(out) + H(+)(out). Responsible for the low-affinity transport of potassium into the cell. Likely operates as a K(+):H(+) symporter. In Enterobacter sp. (strain 638), this protein is Low affinity potassium transport system protein Kup.